The primary structure comprises 328 residues: L-lactate dehydrogenase (328 aa).

Residues Val18, Glu39, Lys46, Tyr71, and 85-86 (GA) contribute to the NAD(+) site. Substrate contacts are provided by Gln88 and Arg94. NAD(+)-binding positions include Ser107, 124–126 (AAN), and Ser149. 126–129 (NPVD) provides a ligand contact to substrate. 154 to 157 (DSAR) contacts substrate. Beta-D-fructose 1,6-bisphosphate-binding residues include Arg159 and His174. The active-site Proton acceptor is His181. At Tyr226 the chain carries Phosphotyrosine. Thr235 serves as a coordination point for substrate.

Belongs to the LDH/MDH superfamily. LDH family. In terms of assembly, homotetramer.

The protein resides in the cytoplasm. It catalyses the reaction (S)-lactate + NAD(+) = pyruvate + NADH + H(+). It functions in the pathway fermentation; pyruvate fermentation to lactate; (S)-lactate from pyruvate: step 1/1. Allosterically activated by fructose 1,6-bisphosphate (FBP). Functionally, catalyzes the conversion of lactate to pyruvate. The chain is L-lactate dehydrogenase from Streptococcus gordonii (strain Challis / ATCC 35105 / BCRC 15272 / CH1 / DL1 / V288).